The sequence spans 207 residues: MANYDVLKLDGTKSGSIELSDAVFGIEPNNSVLFEAINLQRASLRQGTHAVKNRSAVSGGGRKPWKQKGTGRARQGTIRAPQWRGGGIVFGPTPRSYAYKMPKKMRRLALRSALSFKAQENGLTVVDAFNFEAPKTKEFKNVLSTLEQPKKVLVVTENEDVNVELSARNIPGVQVTTAQGLNVLDITNADSLVITEAAAKKVEEVLG.

The tract at residues 50–76 is disordered; that stretch reads AVKNRSAVSGGGRKPWKQKGTGRARQG.

It belongs to the universal ribosomal protein uL4 family. In terms of assembly, part of the 50S ribosomal subunit.

Its function is as follows. One of the primary rRNA binding proteins, this protein initially binds near the 5'-end of the 23S rRNA. It is important during the early stages of 50S assembly. It makes multiple contacts with different domains of the 23S rRNA in the assembled 50S subunit and ribosome. In terms of biological role, forms part of the polypeptide exit tunnel. In Staphylococcus aureus (strain JH9), this protein is Large ribosomal subunit protein uL4.